We begin with the raw amino-acid sequence, 354 residues long: MNECHYDKRMDFFYNRSNTDTADEWTGTKLVIVLCVGTFFCLFIFFSNSLVIAAVITNRKFHFPFYYLLANLAAADFFAGIAYVFLMFNTGPVSKTLTVNRWFLRQGLLDTSLTASLANLLVIAVERHMSIMRMRVHSNLTKKRVTLLILLVWAIAIFMGAVPTLGWNCLCNISACSSLAPIYSRSYLIFWTVSNLLAFFIMVAVYVRIYMYVKRKTNVLSPHTSGSISRRRAPMKLMKTVMTVLGAFVVCWTPGLVVLLLDGLNCKQCNVQHVKRWFLLLALLNSVMNPIIYSYKDEDMYNTMRKMICCALQDSNTERRPSRNPSTIHSRSETGSQYLEDSISQGPVCNKNGS.

The Extracellular portion of the chain corresponds to 1 to 31 (MNECHYDKRMDFFYNRSNTDTADEWTGTKLV). N-linked (GlcNAc...) asparagine glycosylation occurs at Asn-15. A helical transmembrane segment spans residues 32–52 (IVLCVGTFFCLFIFFSNSLVI). Topologically, residues 53–67 (AAVITNRKFHFPFYY) are cytoplasmic. The chain crosses the membrane as a helical span at residues 68-88 (LLANLAAADFFAGIAYVFLMF). Over 89–101 (NTGPVSKTLTVNR) the chain is Extracellular. A helical transmembrane segment spans residues 102–124 (WFLRQGLLDTSLTASLANLLVIA). At 125–146 (VERHMSIMRMRVHSNLTKKRVT) the chain is on the cytoplasmic side. Residues 147–167 (LLILLVWAIAIFMGAVPTLGW) form a helical membrane-spanning segment. Residues 168-186 (NCLCNISACSSLAPIYSRS) lie on the Extracellular side of the membrane. Residue Asn-172 is glycosylated (N-linked (GlcNAc...) asparagine). A helical transmembrane segment spans residues 187–207 (YLIFWTVSNLLAFFIMVAVYV). Topologically, residues 208-240 (RIYMYVKRKTNVLSPHTSGSISRRRAPMKLMKT) are cytoplasmic. A helical membrane pass occupies residues 241–261 (VMTVLGAFVVCWTPGLVVLLL). The Extracellular segment spans residues 262–276 (DGLNCKQCNVQHVKR). A helical transmembrane segment spans residues 277–295 (WFLLLALLNSVMNPIIYSY). Residues 296–354 (KDEDMYNTMRKMICCALQDSNTERRPSRNPSTIHSRSETGSQYLEDSISQGPVCNKNGS) lie on the Cytoplasmic side of the membrane. Cys-309 is lipidated: S-palmitoyl cysteine. The interval 315 to 354 (SNTERRPSRNPSTIHSRSETGSQYLEDSISQGPVCNKNGS) is disordered. Over residues 323–354 (RNPSTIHSRSETGSQYLEDSISQGPVCNKNGS) the composition is skewed to polar residues.

The protein belongs to the G-protein coupled receptor 1 family. In terms of tissue distribution, most abundantly expressed in testes, kidney, and lung, with moderate levels in small intestine, and low levels in heart, stomach, spleen, and adult and perinatal brain. Little or no expression in embryonic brain, liver, or thymus.

Its subcellular location is the cell membrane. Functionally, receptor for lysophosphatidic acid (LPA), a mediator of diverse cellular activities. Seems to be coupled to the G(i)/G(o) and G(q) families of heteromeric G proteins. The polypeptide is Lysophosphatidic acid receptor 3 (Lpar3) (Mus musculus (Mouse)).